Reading from the N-terminus, the 252-residue chain is Small capsomere-interacting protein (252 aa).

Positions 69 to 252 (NKKRSGGPEK…APRGKLGKGR (184 aa)) are disordered. The segment covering 83-93 (ANPGAGPQNAP) has biased composition (low complexity). A compositionally biased stretch (gly residues) spans 94–109 (GCGGGGSGSGGSGPPG). The span at 182-192 (PPAPPPLPQVP) shows a compositional bias: pro residues. A compositionally biased stretch (polar residues) spans 213–237 (LPQQLGTAGSDNSGGQASSPGSQNP).

The protein belongs to the herpesviridae small capsomere-interacting protein family. As to quaternary structure, interacts with the major capsid protein/MCP.

Its subcellular location is the virion. It is found in the host nucleus. Functionally, participates in the assembly of the infectious particles by decorating the outer surface of the capsid shell and thus forming a layer between the capsid and the tegument. Complexes composed of the major capsid protein and small capsomere-interacting protein/SCP assemble together in the host cytoplasm and are translocated to the nucleus, where they accumulate and participate in capsid assembly. This is Small capsomere-interacting protein from Connochaetes taurinus (Blue wildebeest).